A 474-amino-acid chain; its full sequence is Bifunctional ribulose 5-phosphate reductase/CDP-ribitol pyrophosphorylase Bcs1 (474 aa).

Positions 1-238 are ribitol-5-phosphate cytidylyltransferase; the sequence is MNKNKNIGII…DKLFQSRSHF (238 aa). The interval 250-474 is ribulose-5-phosphate reductase; the sequence is YDMKDQVLVV…ITNILADLYK (225 aa).

In the N-terminal section; belongs to the IspD/TarI cytidylyltransferase family. It in the C-terminal section; belongs to the short-chain dehydrogenases/reductases (SDR) family. As to quaternary structure, monomer.

The catalysed reaction is D-ribitol 5-phosphate + CTP + H(+) = CDP-L-ribitol + diphosphate. The enzyme catalyses D-ribitol 5-phosphate + NADP(+) = D-ribulose 5-phosphate + NADPH + H(+). The protein operates within capsule biogenesis; capsule polysaccharide biosynthesis. Functionally, catalyzes the NADPH-dependent reduction of D-ribulose 5-phosphate to D-ribitol 5-phosphate and the further reaction of D-ribitol 5-phosphate with CTP to form CDP-ribitol. The chain is Bifunctional ribulose 5-phosphate reductase/CDP-ribitol pyrophosphorylase Bcs1 from Haemophilus influenzae.